The sequence spans 540 residues: MKKIIVVGSTNVDKVLNVEKYALPGETLAINTYQQSHGGGKGANQAIAAARSGADTTFITKLGNDEDAKMMVKGFKADGMNIDDVITTTDQETGKAYITVDKSGQNSIYVYGGANMAMTPTDVDAHKSAIINADRVIAQLEIPVPAVIEAFKIAKEHGVQTILNPAPAKELPEELLKLTDIITPNESEAATLTGIEVKDETSMLANAKFFFERGIKMVIITVGGRGSFFATPDDHALIPPFPAKVVDTTAAGDTFIGSLASQLEIDLSNIRKAMLYASHASSLTIQVAGAQNSIPTREAILNVINQDQMTKTEIEKQKAQAAAYAAKLVPDHIVLGLGSGTTAAYFVKAINQRINDEHLDIQCVATSVGTEKLAEKLGMRMLDVNTIDQVDLTVDGADVVDHQLNGIKGGGAALLFEKLVADMSKQNIWIVDQSKYTDSLAGHILTIEVIPFGGMGVFRYLKENGYQPEFRFKDNGDILETDSGNYLINIIIPKDADLEKLSIDLKKQTGVVEHGLFLNVCDELIIGGDQIKTIKRSDLS.

The interval 1-308 (MKKIIVVGST…AILNVINQDQ (308 aa)) is ribokinase. Residues 11–13 (NVD), 39–44 (GGKGAN), and glutamate 141 each bind substrate. ATP-binding positions include asparagine 185 and 221–226 (TVGGRG). K(+) is bound by residues aspartate 247 and threonine 249. 252-253 (GD) contacts ATP. Aspartate 253 contacts substrate. The active-site Proton acceptor; for ribokinase activity is aspartate 253. Positions 284, 287, 289, and 293 each coordinate K(+). The interval 309-540 (MTKTEIEKQK…IKTIKRSDLS (232 aa)) is ribose-5-phosphate isomerase A. Substrate contacts are provided by residues 339-342 (SGTT), 395-398 (DGAD), and 408-411 (KGGG). Glutamate 417 acts as the Proton acceptor; for ribose-5-phosphate isomerase activity in catalysis. Residue lysine 435 coordinates substrate.

In the N-terminal section; belongs to the carbohydrate kinase PfkB family. Ribokinase subfamily. It in the C-terminal section; belongs to the ribose 5-phosphate isomerase family. The cofactor is Mg(2+).

Its subcellular location is the cytoplasm. It catalyses the reaction D-ribose + ATP = D-ribose 5-phosphate + ADP + H(+). The enzyme catalyses aldehydo-D-ribose 5-phosphate = D-ribulose 5-phosphate. Its pathway is carbohydrate metabolism; D-ribose degradation; D-ribose 5-phosphate from beta-D-ribopyranose: step 2/2. The protein operates within carbohydrate degradation; pentose phosphate pathway; D-ribose 5-phosphate from D-ribulose 5-phosphate (non-oxidative stage): step 1/1. With respect to regulation, activated by a monovalent cation that binds near, but not in, the active site. The most likely occupant of the site in vivo is potassium. Also activated by ammonium ion. Ion binding induces a conformational change that may alter substrate affinity. Bifunctional enzyme that catalyzes the phosphorylation of ribose at O-5 in a reaction requiring ATP and magnesium, and the reversible conversion of ribose 5-phosphate to ribulose 5-phosphate. The sequence is that of Bifunctional ribokinase/ribose-5-phosphate isomerase A (rbsK/rbiA) from Fructilactobacillus sanfranciscensis (strain ATCC 27651 / DSM 20451 / JCM 5668 / CCUG 30143 / KCTC 3205 / NCIMB 702811 / NRRL B-3934 / L-12) (Lactobacillus sanfranciscensis).